Reading from the N-terminus, the 304-residue chain is Porphobilinogen deaminase (304 aa).

At cysteine 241 the chain carries S-(dipyrrolylmethanemethyl)cysteine.

It belongs to the HMBS family. In terms of assembly, monomer. Dipyrromethane serves as cofactor.

It carries out the reaction 4 porphobilinogen + H2O = hydroxymethylbilane + 4 NH4(+). Its pathway is porphyrin-containing compound metabolism; protoporphyrin-IX biosynthesis; coproporphyrinogen-III from 5-aminolevulinate: step 2/4. Its function is as follows. Tetrapolymerization of the monopyrrole PBG into the hydroxymethylbilane pre-uroporphyrinogen in several discrete steps. This chain is Porphobilinogen deaminase, found in Vesicomyosocius okutanii subsp. Calyptogena okutanii (strain HA).